A 342-amino-acid polypeptide reads, in one-letter code: N-acetyl-gamma-glutamyl-phosphate reductase (342 aa).

Cys-147 is a catalytic residue.

It belongs to the NAGSA dehydrogenase family. Type 1 subfamily.

The protein localises to the cytoplasm. The catalysed reaction is N-acetyl-L-glutamate 5-semialdehyde + phosphate + NADP(+) = N-acetyl-L-glutamyl 5-phosphate + NADPH + H(+). The protein operates within amino-acid biosynthesis; L-arginine biosynthesis; N(2)-acetyl-L-ornithine from L-glutamate: step 3/4. Its function is as follows. Catalyzes the NADPH-dependent reduction of N-acetyl-5-glutamyl phosphate to yield N-acetyl-L-glutamate 5-semialdehyde. The sequence is that of N-acetyl-gamma-glutamyl-phosphate reductase from Campylobacter jejuni subsp. jejuni serotype O:23/36 (strain 81-176).